Consider the following 436-residue polypeptide: Chromosomal replication initiator protein DnaA (436 aa).

The segment at 1 to 80 (MSHEAVWQHV…QAPRFELRVV (80 aa)) is domain I, interacts with DnaA modulators. The segment at 80-100 (VPGVVVQEDIFQAAPAEAPRP) is domain II. The interval 101–317 (KLNPKYTFEN…GALMRAIAFA (217 aa)) is domain III, AAA+ region. ATP-binding residues include G145, G147, K148, and T149. The interval 318–436 (SLNGVELTRA…LLRTLREACT (119 aa)) is domain IV, binds dsDNA.

This sequence belongs to the DnaA family. In terms of assembly, oligomerizes as a right-handed, spiral filament on DNA at oriC.

It localises to the cytoplasm. In terms of biological role, plays an essential role in the initiation and regulation of chromosomal replication. ATP-DnaA binds to the origin of replication (oriC) to initiate formation of the DNA replication initiation complex once per cell cycle. Binds the DnaA box (a 9 base pair repeat at the origin) and separates the double-stranded (ds)DNA. Forms a right-handed helical filament on oriC DNA; dsDNA binds to the exterior of the filament while single-stranded (ss)DNA is stabiized in the filament's interior. The ATP-DnaA-oriC complex binds and stabilizes one strand of the AT-rich DNA unwinding element (DUE), permitting loading of DNA polymerase. After initiation quickly degrades to an ADP-DnaA complex that is not apt for DNA replication. Binds acidic phospholipids. This is Chromosomal replication initiator protein DnaA from Thermus thermophilus (strain ATCC BAA-163 / DSM 7039 / HB27).